The chain runs to 184 residues: Ribosome-recycling factor (184 aa).

It belongs to the RRF family.

It is found in the cytoplasm. Functionally, responsible for the release of ribosomes from messenger RNA at the termination of protein biosynthesis. May increase the efficiency of translation by recycling ribosomes from one round of translation to another. In Leptospira borgpetersenii serovar Hardjo-bovis (strain JB197), this protein is Ribosome-recycling factor.